Here is a 466-residue protein sequence, read N- to C-terminus: MSAIKTRFAPSPTGLIHLGNARTALFSALGGDVFVLRIEDTDLERSRAEFVAELMNDLRWLGLDWQEGPRGAEPDPDWYQSRRGEIYATYYRLLEEKGLAYPCFCTPLELEVSRKVQLGSGRPPRYSGRCAHLPADEVRRRHEEGLAATLRFRVPKDRVVEFEDEVRGPQRFAGEDIGDFIIRRADGSPAFFFCNAIDDALMGITRVLRGEDHLANTPRQLMILAALDLPRPRYAHISLIVGDDGAPLSKRNGSRSIKQLREEGYFPEAVVNMLARLGHHYDSAELLGLPALRAGFDIRRLGRSPARFDVSHLDHWQGLAVRGAADDTLWHWLHTETRAVVPDAHRAGFLDLVRSNCLFPKEADAWARILFTDELELAADIAAVAQAAGEAFYLAAIDAATESPDDFAAFLAGLKRRSGAKGKHLFLPLRAALTGSLDGPELAKIYQMLDKPRLHRRLAEFTYESE.

The short motif at 10-20 is the 'HIGH' region element; sequence PSPTGLIHLGN. Zn(2+) is bound by residues C103, C105, C130, and H132. A 'KMSKS' region motif is present at residues 247 to 251; it reads PLSKR. K250 provides a ligand contact to ATP.

Belongs to the class-I aminoacyl-tRNA synthetase family. Glutamate--tRNA ligase type 1 subfamily. As to quaternary structure, monomer. The cofactor is Zn(2+).

It localises to the cytoplasm. The catalysed reaction is tRNA(Glu) + L-glutamate + ATP = L-glutamyl-tRNA(Glu) + AMP + diphosphate. Its function is as follows. Catalyzes the attachment of glutamate to tRNA(Glu) in a two-step reaction: glutamate is first activated by ATP to form Glu-AMP and then transferred to the acceptor end of tRNA(Glu). The sequence is that of Glutamate--tRNA ligase 1 from Methylococcus capsulatus (strain ATCC 33009 / NCIMB 11132 / Bath).